A 457-amino-acid polypeptide reads, in one-letter code: Siroheme synthase (457 aa).

The segment at 1–204 (MDHLPIFCQL…NDQKAITETT (204 aa)) is precorrin-2 dehydrogenase /sirohydrochlorin ferrochelatase. NAD(+) contacts are provided by residues 22-23 (DV) and 43-44 (LA). Ser-128 bears the Phosphoserine mark. The segment at 216–457 (GEVVLVGAGP…RDKLNWFSNH (242 aa)) is uroporphyrinogen-III C-methyltransferase. Position 225 (Pro-225) interacts with S-adenosyl-L-methionine. Residue Asp-248 is the Proton acceptor of the active site. The active-site Proton donor is Lys-270. Residues 301–303 (GGD), Ile-306, 331–332 (TA), Met-382, and Gly-411 contribute to the S-adenosyl-L-methionine site.

The protein in the N-terminal section; belongs to the precorrin-2 dehydrogenase / sirohydrochlorin ferrochelatase family. This sequence in the C-terminal section; belongs to the precorrin methyltransferase family.

The enzyme catalyses uroporphyrinogen III + 2 S-adenosyl-L-methionine = precorrin-2 + 2 S-adenosyl-L-homocysteine + H(+). It catalyses the reaction precorrin-2 + NAD(+) = sirohydrochlorin + NADH + 2 H(+). It carries out the reaction siroheme + 2 H(+) = sirohydrochlorin + Fe(2+). It participates in cofactor biosynthesis; adenosylcobalamin biosynthesis; precorrin-2 from uroporphyrinogen III: step 1/1. Its pathway is cofactor biosynthesis; adenosylcobalamin biosynthesis; sirohydrochlorin from precorrin-2: step 1/1. The protein operates within porphyrin-containing compound metabolism; siroheme biosynthesis; precorrin-2 from uroporphyrinogen III: step 1/1. It functions in the pathway porphyrin-containing compound metabolism; siroheme biosynthesis; siroheme from sirohydrochlorin: step 1/1. It participates in porphyrin-containing compound metabolism; siroheme biosynthesis; sirohydrochlorin from precorrin-2: step 1/1. Multifunctional enzyme that catalyzes the SAM-dependent methylations of uroporphyrinogen III at position C-2 and C-7 to form precorrin-2 via precorrin-1. Then it catalyzes the NAD-dependent ring dehydrogenation of precorrin-2 to yield sirohydrochlorin. Finally, it catalyzes the ferrochelation of sirohydrochlorin to yield siroheme. In Shigella boydii serotype 18 (strain CDC 3083-94 / BS512), this protein is Siroheme synthase.